Consider the following 472-residue polypeptide: Alkaline phosphatase (472 aa).

An N-terminal signal peptide occupies residues 1-21 (MKQSAIALALLSCLITPVSQA). Asp74 is a Mg(2+) binding site. Asp74 provides a ligand contact to Zn(2+). The Phosphoserine intermediate role is filled by Ser125. Positions 176 and 178 each coordinate Mg(2+). 2 disulfides stabilise this stretch: Cys191/Cys201 and Cys309/Cys359. Glu345 lines the Mg(2+) pocket. Residues Asp350, His354, Asp392, His393, and His435 each contribute to the Zn(2+) site.

This sequence belongs to the alkaline phosphatase family. In terms of assembly, homodimer. It depends on Mg(2+) as a cofactor. Zn(2+) is required as a cofactor.

It is found in the periplasm. The catalysed reaction is a phosphate monoester + H2O = an alcohol + phosphate. This is Alkaline phosphatase (phoA) from Escherichia fergusonii (strain ATCC 35469 / DSM 13698 / CCUG 18766 / IAM 14443 / JCM 21226 / LMG 7866 / NBRC 102419 / NCTC 12128 / CDC 0568-73).